A 327-amino-acid polypeptide reads, in one-letter code: Mitochondrial coenzyme A transporter SLC25A42 (327 aa).

3 Solcar repeats span residues 34–120, 132–217, and 227–315; these read KSVL…YKKL, LTPI…LKKL, and PYTF…TQIL. The next 6 helical transmembrane spans lie at 36–56, 92–112, 138–158, 192–209, 233–253, and 296–316; these read VLNS…AVAP, LWRG…IQFC, LLAG…LDLV, GFTP…ISFF, LLFG…LDVV, and VKGP…QILL.

It belongs to the mitochondrial carrier (TC 2.A.29) family.

The protein resides in the mitochondrion inner membrane. It catalyses the reaction ADP(out) + CoA(in) = ADP(in) + CoA(out). The catalysed reaction is 3'-dephospho-CoA(in) + ADP(out) = 3'-dephospho-CoA(out) + ADP(in). The enzyme catalyses adenosine 3',5'-bisphosphate(in) + ADP(out) = adenosine 3',5'-bisphosphate(out) + ADP(in). It carries out the reaction AMP(in) + ADP(out) = AMP(out) + ADP(in). It catalyses the reaction dADP(in) + ADP(out) = dADP(out) + ADP(in). The catalysed reaction is ADP(in) + ATP(out) = ADP(out) + ATP(in). Mitochondrial carrier mediating the transport of coenzyme A (CoA) in mitochondria in exchange for intramitochondrial (deoxy)adenine nucleotides and adenosine 3',5'-diphosphate. The polypeptide is Mitochondrial coenzyme A transporter SLC25A42 (slc25a42) (Xenopus laevis (African clawed frog)).